A 162-amino-acid polypeptide reads, in one-letter code: Hydrogenase-2 operon protein HybE (162 aa).

It belongs to the HupJ family.

This chain is Hydrogenase-2 operon protein HybE (hybE), found in Escherichia coli O6:H1 (strain CFT073 / ATCC 700928 / UPEC).